The sequence spans 188 residues: Holliday junction branch migration complex subunit RuvA (188 aa).

Residues 1–64 (MIAGISGRVL…QDGITLYGFS (64 aa)) are domain I. The segment at 65–143 (NERKKELFLS…SAGIKDMRIY (79 aa)) is domain II. Y143 is a region of interest (flexible linker). The tract at residues 143–188 (YHESLEALISLGYPEKQAREAVKHVYREGMKTSELIKEALKFLSQR) is domain III.

Belongs to the RuvA family. As to quaternary structure, homotetramer. Forms an RuvA(8)-RuvB(12)-Holliday junction (HJ) complex. HJ DNA is sandwiched between 2 RuvA tetramers; dsDNA enters through RuvA and exits via RuvB. An RuvB hexamer assembles on each DNA strand where it exits the tetramer. Each RuvB hexamer is contacted by two RuvA subunits (via domain III) on 2 adjacent RuvB subunits; this complex drives branch migration. In the full resolvosome a probable DNA-RuvA(4)-RuvB(12)-RuvC(2) complex forms which resolves the HJ.

It is found in the cytoplasm. The RuvA-RuvB-RuvC complex processes Holliday junction (HJ) DNA during genetic recombination and DNA repair, while the RuvA-RuvB complex plays an important role in the rescue of blocked DNA replication forks via replication fork reversal (RFR). RuvA specifically binds to HJ cruciform DNA, conferring on it an open structure. The RuvB hexamer acts as an ATP-dependent pump, pulling dsDNA into and through the RuvAB complex. HJ branch migration allows RuvC to scan DNA until it finds its consensus sequence, where it cleaves and resolves the cruciform DNA. The protein is Holliday junction branch migration complex subunit RuvA of Thermotoga petrophila (strain ATCC BAA-488 / DSM 13995 / JCM 10881 / RKU-1).